Reading from the N-terminus, the 271-residue chain is Ferric vulnibactin reductase VuuB (271 aa).

In terms of domain architecture, FAD-binding FR-type spans 8-131; that stretch reads VYPMLLDFVR…IGPAGPDPLI (124 aa).

This sequence belongs to the SIP oxidoreductase family. Monomer. FAD serves as cofactor.

It localises to the cytoplasm. The catalysed reaction is 2 a Fe(II)-siderophore + NAD(+) + H(+) = 2 a Fe(III)-siderophore + NADH. In terms of biological role, ferric-siderophore reductase involved in iron removal from the siderophores after their transport into the cell. Acts as a major ferric-vulnibactin reductase catalyzing the reduction of Fe(3+)-vulnibactin, a catecholate siderophore synthesized by V.vulnificus. The protein is Ferric vulnibactin reductase VuuB of Vibrio vulnificus (strain CMCP6).